Consider the following 410-residue polypeptide: Killer cell immunoglobulin-like receptor 3DL3 (410 aa).

Residues 1–25 form the signal peptide; sequence MSLMVVSMACVGFFLLEGPWPHVGG. Topologically, residues 26-322 are extracellular; the sequence is QDKPFLSAWP…VSVTGNSRHL (297 aa). 3 consecutive Ig-like C2-type domains span residues 42–97, 137–197, and 237–295; these read GQHV…RCCS, GETV…RCFG, and GENV…RCFG. Intrachain disulfides connect C49–C95 and C144–C195. N-linked (GlcNAc...) asparagine glycans are attached at residues N179, N239, and N273. C244 and C293 are joined by a disulfide. The chain crosses the membrane as a helical span at residues 323–343; sequence HVLIGTSVVIIPFAILLFFLL. Residues 344–410 are Cytoplasmic-facing; the sequence is HRWCANKKNA…PKTPPTDTSV (67 aa).

It belongs to the immunoglobulin superfamily.

It localises to the cell membrane. Functionally, receptor on natural killer cells. May inhibit the activity of NK cells thus preventing cell lysis. The polypeptide is Killer cell immunoglobulin-like receptor 3DL3 (KIR3DL3) (Homo sapiens (Human)).